A 306-amino-acid chain; its full sequence is Agmatinase (306 aa).

The Mn(2+) site is built by histidine 126, aspartate 149, histidine 151, aspartate 153, aspartate 230, and aspartate 232.

The protein belongs to the arginase family. Agmatinase subfamily. Requires Mn(2+) as cofactor.

The catalysed reaction is agmatine + H2O = urea + putrescine. It functions in the pathway amine and polyamine biosynthesis; putrescine biosynthesis via agmatine pathway; putrescine from agmatine: step 1/1. Its function is as follows. Catalyzes the formation of putrescine from agmatine. The sequence is that of Agmatinase from Escherichia coli O9:H4 (strain HS).